A 242-amino-acid polypeptide reads, in one-letter code: Phosphoribosylaminoimidazole-succinocarboxamide synthase (242 aa).

It belongs to the SAICAR synthetase family.

It carries out the reaction 5-amino-1-(5-phospho-D-ribosyl)imidazole-4-carboxylate + L-aspartate + ATP = (2S)-2-[5-amino-1-(5-phospho-beta-D-ribosyl)imidazole-4-carboxamido]succinate + ADP + phosphate + 2 H(+). It functions in the pathway purine metabolism; IMP biosynthesis via de novo pathway; 5-amino-1-(5-phospho-D-ribosyl)imidazole-4-carboxamide from 5-amino-1-(5-phospho-D-ribosyl)imidazole-4-carboxylate: step 1/2. This is Phosphoribosylaminoimidazole-succinocarboxamide synthase from Magnetococcus marinus (strain ATCC BAA-1437 / JCM 17883 / MC-1).